The primary structure comprises 233 residues: Small ribosomal subunit protein uS3 (233 aa).

Residues 39-107 enclose the KH type-2 domain; it reads VRQFLTKELS…PAQINIAEVR (69 aa).

This sequence belongs to the universal ribosomal protein uS3 family. In terms of assembly, part of the 30S ribosomal subunit. Forms a tight complex with proteins S10 and S14.

Its function is as follows. Binds the lower part of the 30S subunit head. Binds mRNA in the 70S ribosome, positioning it for translation. In Vibrio vulnificus (strain CMCP6), this protein is Small ribosomal subunit protein uS3.